Consider the following 211-residue polypeptide: DNA/RNA-binding protein ALBA2 (211 aa).

Over residues 84–99 the composition is skewed to basic and acidic residues; that stretch reads NSGLKKNAKNEDKKSG. The tract at residues 84–121 is disordered; the sequence is NSGLKKNAKNEDKKSGDEEEEEEEEEEDEENNKNKEAN. The segment covering 100-113 has biased composition (acidic residues); that stretch reads DEEEEEEEEEEDEE.

The protein belongs to the histone-like Alba family. In terms of assembly, identified in a TARE6-associated complex consisting of over 30 proteins and including ALBA1, ALBA2 and ALBA4; the complex binds to the non-coding subtelomeric repeat region TARE6.

It localises to the nucleus. It is found in the chromosome. Its subcellular location is the telomere. The protein localises to the cytoplasm. Functionally, possesses DNA- and RNA-binding activities. Binds to DNA with relaxed sequence specificity. Associates with the subtelomeric TARE6 repeats. The polypeptide is DNA/RNA-binding protein ALBA2 (Plasmodium falciparum (isolate 3D7)).